The primary structure comprises 256 residues: Small ribosomal subunit protein uS2 (256 aa).

It belongs to the universal ribosomal protein uS2 family.

The chain is Small ribosomal subunit protein uS2 from Acidiphilium cryptum (strain JF-5).